A 290-amino-acid polypeptide reads, in one-letter code: Diaminopimelate epimerase (290 aa).

Positions 11 and 78 each coordinate substrate. Cysteine 87 functions as the Proton donor in the catalytic mechanism. Substrate-binding positions include 88 to 89, asparagine 163, asparagine 199, and 217 to 218; these read GN and ER. Cysteine 226 acts as the Proton acceptor in catalysis. 227–228 is a substrate binding site; it reads GT.

This sequence belongs to the diaminopimelate epimerase family. In terms of assembly, homodimer.

The protein resides in the cytoplasm. It carries out the reaction (2S,6S)-2,6-diaminopimelate = meso-2,6-diaminopimelate. Its pathway is amino-acid biosynthesis; L-lysine biosynthesis via DAP pathway; DL-2,6-diaminopimelate from LL-2,6-diaminopimelate: step 1/1. In terms of biological role, catalyzes the stereoinversion of LL-2,6-diaminopimelate (L,L-DAP) to meso-diaminopimelate (meso-DAP), a precursor of L-lysine and an essential component of the bacterial peptidoglycan. This Mycobacterium ulcerans (strain Agy99) protein is Diaminopimelate epimerase.